Consider the following 356-residue polypeptide: MASSTAAVPFLAPPLEQLRHLAEELRSLLPRVRVGEAQETAEEFNREMFWRRLNEAAVKVNGEATVLTTHFSKLPWPSPQETQRICEQVRIAIEEIIIVYYSLPKDQGITLRKLVRNAALDIVDGMAQLLEVLLTAPSQSTENGDLISCNSVSVACQQVPEIPKDNKAAALLMLTKSVDFVKDAHEEMEQAVEECDPYSGLLNDSEDNSDSHSDEDGVLGLPSNRDSYWSEEDQELIIPCLALVRASRASLKKIRILVAENGKKDEVAQLDDIVDISDEISPSVDDLVLSIYPPVCHLTVRISSAKLVSVLIKALEITKASHVSPHPGDSWIPLLINAVDHCMNRIKALTQRAAEL.

Residue Ala-2 is modified to N-acetylalanine. Interaction with TCF3 regions lie at residues 2–181 (ASST…VDFV) and 147–356 (ISCN…AAEL). The interval 2–187 (ASSTAAVPFL…VDFVKDAHEE (186 aa)) is interaction with RPLP0. The tract at residues 2–205 (ASSTAAVPFL…DPYSGLLNDS (204 aa)) is required for interaction with CCND1. Residues 198–224 (YSGLLNDSEDNSDSHSDEDGVLGLPSN) form a disordered region. Positions 236 to 356 (LIIPCLALVR…KALTQRAAEL (121 aa)) are interaction with RPLP0.

It belongs to the CCNDBP1 family. Interacts with CCND1 and GRAP2. May also interact with COPS5, RPLP0, SIRT6, SYF2 and TCF3. Phosphorylated. In terms of tissue distribution, expressed at high levels in brain, intestine, muscle and ovary and at lower levels in heart, kidney, liver, lung, spleen and testis.

It is found in the cytoplasm. It localises to the nucleus. Functionally, may negatively regulate cell cycle progression. May act at least in part via inhibition of the cyclin-D1/CDK4 complex, thereby preventing phosphorylation of RB1 and blocking E2F-dependent transcription. May be required for hepatocyte proliferation. In Mus musculus (Mouse), this protein is Cyclin-D1-binding protein 1 (Ccndbp1).